A 95-amino-acid chain; its full sequence is Aspartyl/glutamyl-tRNA(Asn/Gln) amidotransferase subunit C (95 aa).

The protein belongs to the GatC family. In terms of assembly, heterotrimer of A, B and C subunits.

It catalyses the reaction L-glutamyl-tRNA(Gln) + L-glutamine + ATP + H2O = L-glutaminyl-tRNA(Gln) + L-glutamate + ADP + phosphate + H(+). The catalysed reaction is L-aspartyl-tRNA(Asn) + L-glutamine + ATP + H2O = L-asparaginyl-tRNA(Asn) + L-glutamate + ADP + phosphate + 2 H(+). Functionally, allows the formation of correctly charged Asn-tRNA(Asn) or Gln-tRNA(Gln) through the transamidation of misacylated Asp-tRNA(Asn) or Glu-tRNA(Gln) in organisms which lack either or both of asparaginyl-tRNA or glutaminyl-tRNA synthetases. The reaction takes place in the presence of glutamine and ATP through an activated phospho-Asp-tRNA(Asn) or phospho-Glu-tRNA(Gln). The protein is Aspartyl/glutamyl-tRNA(Asn/Gln) amidotransferase subunit C of Trichlorobacter lovleyi (strain ATCC BAA-1151 / DSM 17278 / SZ) (Geobacter lovleyi).